The chain runs to 571 residues: RUN and FYVE domain-containing protein 4 (571 aa).

The region spanning 33–166 (TDTSAELHRL…VAFELDLQQP (134 aa)) is the RUN domain. The tract at residues 174–207 (MFSESRCSSSTQTQGRRPRKNKDAPKKIPAAYGG) is disordered. Positions 178-188 (SRCSSSTQTQG) are enriched in polar residues. Residues 408–481 (EVSLQDEIKS…ERRDAMYQEE (74 aa)) adopt a coiled-coil conformation. An FYVE-type zinc finger spans residues 474 to 567 (RDAMYQEELG…CCPPCAQGRE (94 aa)). 8 residues coordinate Zn(2+): Cys-521, Cys-524, Cys-537, Cys-540, Cys-545, Cys-548, Cys-559, and Cys-562.

As to quaternary structure, forms homodimers (via coiled coil domain). Interacts with RAB7A. Forms a ternary complex with RAB7A and LAMP2; the interaction with RAB7A is mediated by RUFY4 (via RUN and coiled coil domains). Interacts with GTP-, but not GDP-bound ARL8A and ARL8B. Interacts with dynactin/DCTN1 and the dynein intermediate chain DYNC1I1/2.

It is found in the cytoplasmic vesicle. It localises to the autophagosome. Its subcellular location is the lysosome. In terms of biological role, ARL8 effector that promotes the coupling of endolysosomes to dynein-dynactin for retrograde transport along microtubules. Acts by binding both GTP-bound ARL8 and dynein-dynactin. In nonneuronal cells, promotes concentration of endolysosomes in the juxtanuclear area. In hippocampal neurons, drives retrograde transport of endolysosomes from the axon to the soma. Positive regulator of macroautophagy in dendritic cells. Increases autophagic flux, probably by stimulating both autophagosome formation and facilitating tethering with lysosomes. Binds to phosphatidylinositol 3-phosphate (PtdIns3P) through its FYVE-type zinc finger. Positive regulator of osteosclast bone-resorbing activity, possibly by promoting late endosome-lysosome fusion by acting as an adapter protein between RAB7A on late endosomes and LAMP2 on primary lysosomes. The polypeptide is RUN and FYVE domain-containing protein 4 (RUFY4) (Homo sapiens (Human)).